The primary structure comprises 215 residues: Superoxide dismutase [Mn] (215 aa).

Residues His-27, His-83, Asp-170, and His-174 each contribute to the Mn(2+) site.

It belongs to the iron/manganese superoxide dismutase family. As to quaternary structure, homodimer. Mn(2+) serves as cofactor.

The catalysed reaction is 2 superoxide + 2 H(+) = H2O2 + O2. Functionally, destroys superoxide anion radicals which are normally produced within the cells and which are toxic to biological systems. The polypeptide is Superoxide dismutase [Mn] (sodA) (Haemophilus influenzae (strain ATCC 51907 / DSM 11121 / KW20 / Rd)).